The chain runs to 197 residues: Dephospho-CoA kinase (197 aa).

The DPCK domain occupies 2–197; that stretch reads IIGITGGIAS…SALLSLANPR (196 aa). Residue 10-15 coordinates ATP; that stretch reads ASGKST.

It belongs to the CoaE family.

Its subcellular location is the cytoplasm. The enzyme catalyses 3'-dephospho-CoA + ATP = ADP + CoA + H(+). It participates in cofactor biosynthesis; coenzyme A biosynthesis; CoA from (R)-pantothenate: step 5/5. Catalyzes the phosphorylation of the 3'-hydroxyl group of dephosphocoenzyme A to form coenzyme A. The chain is Dephospho-CoA kinase from Streptococcus pyogenes serotype M28 (strain MGAS6180).